The following is a 224-amino-acid chain: Prophage repressor CohE (224 aa).

This Escherichia coli (strain K12) protein is Prophage repressor CohE (cohE).